Reading from the N-terminus, the 61-residue chain is Small ribosomal subunit protein uS14B (61 aa).

Zn(2+) contacts are provided by Cys-24, Cys-27, Cys-40, and Cys-43.

Belongs to the universal ribosomal protein uS14 family. Zinc-binding uS14 subfamily. In terms of assembly, part of the 30S ribosomal subunit. Contacts proteins S3 and S10. The cofactor is Zn(2+).

Its function is as follows. Binds 16S rRNA, required for the assembly of 30S particles and may also be responsible for determining the conformation of the 16S rRNA at the A site. The sequence is that of Small ribosomal subunit protein uS14B from Pediococcus pentosaceus (strain ATCC 25745 / CCUG 21536 / LMG 10740 / 183-1w).